Consider the following 429-residue polypeptide: Enolase (429 aa).

Gln167 lines the (2R)-2-phosphoglycerate pocket. Catalysis depends on Glu209, which acts as the Proton donor. The Mg(2+) site is built by Asp246, Glu289, and Asp316. (2R)-2-phosphoglycerate-binding residues include Lys341, Arg370, Ser371, and Lys392. Residue Lys341 is the Proton acceptor of the active site.

This sequence belongs to the enolase family. As to quaternary structure, component of the RNA degradosome, a multiprotein complex involved in RNA processing and mRNA degradation. It depends on Mg(2+) as a cofactor.

Its subcellular location is the cytoplasm. The protein resides in the secreted. It is found in the cell surface. The catalysed reaction is (2R)-2-phosphoglycerate = phosphoenolpyruvate + H2O. The protein operates within carbohydrate degradation; glycolysis; pyruvate from D-glyceraldehyde 3-phosphate: step 4/5. Functionally, catalyzes the reversible conversion of 2-phosphoglycerate (2-PG) into phosphoenolpyruvate (PEP). It is essential for the degradation of carbohydrates via glycolysis. In Pseudomonas fluorescens (strain ATCC BAA-477 / NRRL B-23932 / Pf-5), this protein is Enolase.